The sequence spans 378 residues: Chlorophyll synthase, chloroplastic (378 aa).

The N-terminal 45 residues, 1-45 (MATSHPLAAAAATSSSSATFRPPLRFLSSPPSSLTLNRRRSFPVV), are a transit peptide targeting the chloroplast. 7 helical membrane passes run 173–193 (VITQIWVLLLGGLGLGALLDI), 199–219 (FPIIFYLALGGSLLSYIYSAP), 232–252 (FALGASYIGLPWWAGQALFGT), 257–277 (IVVLTCLYSIAGLGIAIVNDF), 302–322 (WICVGAIDITQLSVAAYLLST), 327–347 (YALALLGLTIPQVILQFQYFL), and 357–377 (YQASAQPFFVFGLLVTALATS).

This sequence belongs to the UbiA prenyltransferase family. Chlorophyll synthase subfamily. The cofactor is Mg(2+). Requires Zn(2+) as cofactor. Mn(2+) serves as cofactor.

It is found in the plastid. Its subcellular location is the chloroplast membrane. The enzyme catalyses phytyl diphosphate + chlorophyllide a + H(+) = chlorophyll a + diphosphate. Its activity is regulated as follows. Inhibited by N-phenylmaleimide (NPM) and diacetyl. In terms of biological role, involved in one of the last steps of the biosynthesis of chlorophyll a. Catalyzes the esterification of chlorophillide a with either geranylgeranyldiphosphate (GGPP) or phytyldiphosphate (PhyPP). May also use with a lower efficiency the monophosphates GGMP and PhyMP, but not the non-phosphorylated alcohols geranylgeraniol and phytol. The tetraprenyl diphosphate must bind to the enzyme as the first substrate and esterification occurs when this pre-loaded enzyme meets the second substrate, chlorophyllide. This Avena sativa (Oat) protein is Chlorophyll synthase, chloroplastic (CHLG).